The primary structure comprises 318 residues: Thymidylate synthase (318 aa).

DUMP-binding positions include R25 and 180–181; that span reads RR. C200 (nucleophile) is an active-site residue. Residues 220-223, N231, and 261-263 contribute to the dUMP site; these read RSGD and HIY. D223 contacts (6R)-5,10-methylene-5,6,7,8-tetrahydrofolate. A317 is a binding site for (6R)-5,10-methylene-5,6,7,8-tetrahydrofolate.

The protein belongs to the thymidylate synthase family. Bacterial-type ThyA subfamily. As to quaternary structure, homodimer.

Its subcellular location is the cytoplasm. It carries out the reaction dUMP + (6R)-5,10-methylene-5,6,7,8-tetrahydrofolate = 7,8-dihydrofolate + dTMP. The protein operates within pyrimidine metabolism; dTTP biosynthesis. Its function is as follows. Catalyzes the reductive methylation of 2'-deoxyuridine-5'-monophosphate (dUMP) to 2'-deoxythymidine-5'-monophosphate (dTMP) while utilizing 5,10-methylenetetrahydrofolate (mTHF) as the methyl donor and reductant in the reaction, yielding dihydrofolate (DHF) as a by-product. This enzymatic reaction provides an intracellular de novo source of dTMP, an essential precursor for DNA biosynthesis. In Lactobacillus acidophilus (strain ATCC 700396 / NCK56 / N2 / NCFM), this protein is Thymidylate synthase.